The primary structure comprises 49 residues: Osteocalcin (49 aa).

One can recognise a Gla domain in the interval 1–47; it reads YLDHGLGAPAPYPDPLEPRREVCELNPDCDELADHIGFQEAYRRFYG. Hydroxyproline is present on proline 9. Glutamate 17, glutamate 21, glutamate 24, and aspartate 30 together coordinate Ca(2+). Residues glutamate 17, glutamate 21, and glutamate 24 each carry the 4-carboxyglutamate modification. Cysteine 23 and cysteine 29 are oxidised to a cystine.

Belongs to the osteocalcin/matrix Gla protein family. In terms of processing, gamma-carboxyglutamate residues are formed by vitamin K dependent carboxylation by GGCX. These residues are essential for the binding of calcium. Decarboxylation promotes the hormone activity.

Its subcellular location is the secreted. The carboxylated form is one of the main organic components of the bone matrix, which constitutes 1-2% of the total bone protein. It acts as a negative regulator of bone formation and is required to limit bone formation without impairing bone resorption or mineralization. The carboxylated form binds strongly to apatite and calcium. Its function is as follows. The uncarboxylated form acts as a hormone secreted by osteoblasts, which regulates different cellular processes, such as energy metabolism, male fertility and brain development. Regulates of energy metabolism by acting as a hormone favoring pancreatic beta-cell proliferation, insulin secretion and sensitivity and energy expenditure. Uncarboxylated osteocalcin hormone also promotes testosterone production in the testes: acts as a ligand for G protein-coupled receptor GPRC6A at the surface of Leydig cells, initiating a signaling response that promotes the expression of enzymes required for testosterone synthesis in a CREB-dependent manner. Also acts as a regulator of brain development: osteocalcin hormone crosses the blood-brain barrier and acts as a ligand for GPR158 on neurons, initiating a signaling response that prevents neuronal apoptosis in the hippocampus, favors the synthesis of all monoamine neurotransmitters and inhibits that of gamma-aminobutyric acid (GABA). Osteocalcin also crosses the placenta during pregnancy and maternal osteocalcin is required for fetal brain development. This is Osteocalcin (BGLAP) from Sus scrofa (Pig).